A 693-amino-acid chain; its full sequence is MAREFSLAKTRNIGIMAHVDAGKTTTTERILYYTGKIHKIGETHEGASQMDWMEQEQERGITITSAATTAQWNGHRVNIIDTPGHVDFTIEVQRSLRVLDGAVTVLDSQSGVEPQTETVWRQATEYGVPRIVFANKMDKIGADFLYSVSTLHDRLQANAHPIQLPIGAEDDFRGIIDLIKMKAEIYTNDLGTDILEEDIPAEYVDQANEYREKLIEAVAETDEDLMMKYLEGEEITNDELKAAIRRATINVEFFPVLCGSAFKNKGVQLMLDAVIDYLPSPLDIPAIKGINPDTGEEETRPASDEAPFAALAFKIMTDPFVGRLTFIRVYSGILQSGSYVMNTSKGKRERIGRILQMHANSRQEIEQVYAGDIAAAIGLKDTTTGDSLTDEKAKVILESIEVPEPVIQLMVEPKTKADQDKMAIGLQKLAEEDPTFRVETNPETGETVISGMGELHLDVLVDRLKREHKVEANVGAPQVSYRETFRAATQARGFFKRQSGGKGQFGDVWIEFTPNEEGKGFEFENAIVGGVVPREFIPAVEKGLEESMANGVLAGYPMVDIKAKLYDGSYHDVDSSETAFKIAASLALKEAAKTAQPTILEPMMLVTITVPEENLGDVMGHVTARRGRVDGMEAHGNTQIVRAYVPLAEMFGYATTLRSATQGRGTFMMVFDHYEDVPKSVQEEIIKKNSGEA.

Residues 8–282 enclose the tr-type G domain; that stretch reads AKTRNIGIMA…AVIDYLPSPL (275 aa). GTP is bound by residues 17–24, 81–85, and 135–138; these read AHVDAGKT, DTPGH, and NKMD.

It belongs to the TRAFAC class translation factor GTPase superfamily. Classic translation factor GTPase family. EF-G/EF-2 subfamily.

Its subcellular location is the cytoplasm. Catalyzes the GTP-dependent ribosomal translocation step during translation elongation. During this step, the ribosome changes from the pre-translocational (PRE) to the post-translocational (POST) state as the newly formed A-site-bound peptidyl-tRNA and P-site-bound deacylated tRNA move to the P and E sites, respectively. Catalyzes the coordinated movement of the two tRNA molecules, the mRNA and conformational changes in the ribosome. The polypeptide is Elongation factor G (Streptococcus thermophilus (strain CNRZ 1066)).